Reading from the N-terminus, the 309-residue chain is Glutaminase (309 aa).

Substrate is bound by residues Ser64, Asn114, Glu160, Asn167, Tyr191, Tyr243, and Val261.

The protein belongs to the glutaminase family. In terms of assembly, homotetramer.

The enzyme catalyses L-glutamine + H2O = L-glutamate + NH4(+). This Methylorubrum populi (strain ATCC BAA-705 / NCIMB 13946 / BJ001) (Methylobacterium populi) protein is Glutaminase.